The following is a 311-amino-acid chain: Aquaporin-1 (311 aa).

Residues 1 to 16 (MHPQVASLFDNVYEDL) are Cytoplasmic-facing. The chain crosses the membrane as a helical span at residues 17-37 (AAATLEFIGTAFFLLFGLGGI). The Extracellular segment spans residues 38–56 (QASTAEDTASSQPPASGIE). The chain crosses the membrane as a helical span at residues 57–77 (HVLYISTCMGFSLVVSAWLFF). A topological domain (cytoplasmic) is located at residue Arg78. The chain crosses the membrane as a helical span at residues 79-99 (VTGGLFNPNISFALLLVGGLK). Positions 85-87 (NPN) match the NPA 1 motif. Position 100 (Pro100) is a topological domain, extracellular. A helical transmembrane segment spans residues 101 to 121 (LRFVLFCIAQLTGAIAGAAIV). The Cytoplasmic segment spans residues 122-143 (RGLTSAPLSVNNVLQQGTSAAQ). A helical membrane pass occupies residues 144–164 (GVFIEMFITAALVLSVLMLAA). Over 165–168 (EKHE) the chain is Extracellular. A helical transmembrane segment spans residues 169–189 (ATPFAPVGIGLTLFACHLFAV). Topologically, residues 190-215 (YYTGAAMNSARAFGPAVISGFPEPQH) are cytoplasmic. Residues 197–199 (NSA) carry the NPA 2 motif. The chain crosses the membrane as a helical span at residues 216–236 (WVYWVGPFLGSLLGAGFYATL). Residues 237–311 (KHYKYWRLNP…TSSRTNFSPV (75 aa)) are Extracellular-facing. Residues 276-311 (DEETRNGCASNEEGVRATGDEKSSNATSSRTNFSPV) are disordered. Basic and acidic residues predominate over residues 288-298 (EGVRATGDEKS). Polar residues predominate over residues 299–311 (SNATSSRTNFSPV). A glycan (N-linked (GlcNAc...) asparagine) is linked at Asn300.

The protein belongs to the MIP/aquaporin (TC 1.A.8) family.

It localises to the cell membrane. The catalysed reaction is H2O(in) = H2O(out). The enzyme catalyses H2O2(out) = H2O2(in). It catalyses the reaction nitric oxide(out) = nitric oxide(in). It carries out the reaction CO2(out) = CO2(in). Water channel required to facilitate the transport of water across membranes. Also mediates the transport nitric oxide, hydrogen peroxide and carbon dioxide across the membrane. Required for Hartig net development in trembling aspen trees. Contributes in fungal cellular processes during the basidiocarp formation. The polypeptide is Aquaporin-1 (Laccaria bicolor (Bicoloured deceiver)).